The primary structure comprises 257 residues: Protein KlaA (257 aa).

In terms of biological role, belongs to the kla operon, which is associated with cryptic tellurite resistance, and IncW plasmid fertility inhibition. This chain is Protein KlaA (klaA), found in Escherichia coli.